A 553-amino-acid polypeptide reads, in one-letter code: Putative transport protein YidE (553 aa).

A run of 5 helical transmembrane segments spans residues 4–24, 28–48, 65–85, 95–115, and 158–178; these read IALTVSVLALVAVVGLWIGNI, GVGFGIGGVLFGGIIVGHFVD, FGLILFVYTIGIQVGPGFFAS, LFAVLIVIMGGLVTAILHKIF, and MSYAMAYPFGICGILLTMWLM. 2 RCK C-terminal domains span residues 192-276 and 279-361; these read KHES…VIGK and DTSL…VVGN. The next 6 membrane-spanning stretches (helical) occupy residues 371-391, 393-413, 437-457, 464-484, 493-513, and 533-553; these read MLPVFIGIGLGVLLGSIPLFV, GFPVALKLGLAGGPLIMALIL, LGIVLFLAVVGLKSGGDFVDT, LSWIGYGIFITAIPLITIGLL, YLTLCGMLAGSMTDPPALAFA, and LVMFLRIITPQLLAVIFWGMG.

The protein belongs to the AAE transporter (TC 2.A.81) family. YidE subfamily.

It localises to the cell membrane. The protein is Putative transport protein YidE of Salmonella paratyphi C (strain RKS4594).